The primary structure comprises 189 residues: Photosystem I assembly protein Ycf4 (189 aa).

2 consecutive transmembrane segments (helical) span residues 31 to 51 (TVIL…YFGF) and 70 to 90 (VMSF…LTII).

It belongs to the Ycf4 family.

Its subcellular location is the plastid. It is found in the chloroplast thylakoid membrane. Seems to be required for the assembly of the photosystem I complex. In Chlorokybus atmophyticus (Soil alga), this protein is Photosystem I assembly protein Ycf4.